The following is a 122-amino-acid chain: Large ribosomal subunit protein uL14 (122 aa).

It belongs to the universal ribosomal protein uL14 family. As to quaternary structure, part of the 50S ribosomal subunit. Forms a cluster with proteins L3 and L19. In the 70S ribosome, L14 and L19 interact and together make contacts with the 16S rRNA in bridges B5 and B8.

In terms of biological role, binds to 23S rRNA. Forms part of two intersubunit bridges in the 70S ribosome. The sequence is that of Large ribosomal subunit protein uL14 from Nitratidesulfovibrio vulgaris (strain ATCC 29579 / DSM 644 / CCUG 34227 / NCIMB 8303 / VKM B-1760 / Hildenborough) (Desulfovibrio vulgaris).